Reading from the N-terminus, the 435-residue chain is C4-dicarboxylate transport protein (435 aa).

The next 9 helical transmembrane spans lie at 4 to 24 (SLFK…ILLG), 44 to 64 (LIKM…IAGM), 76 to 96 (VALL…LIIV), 142 to 162 (IGAF…LFGF), 184 to 204 (VIFG…FGAM), 222 to 242 (LIIC…GTIA), 289 to 309 (VVGL…SIYL), 326 to 346 (IFHQ…VAGV), and 352 to 372 (IVLA…LALI).

This sequence belongs to the dicarboxylate/amino acid:cation symporter (DAACS) (TC 2.A.23) family.

The protein resides in the cell inner membrane. Its function is as follows. Responsible for the transport of dicarboxylates such as succinate, fumarate, and malate from the periplasm across the membrane. This chain is C4-dicarboxylate transport protein, found in Salmonella paratyphi A (strain ATCC 9150 / SARB42).